Here is an 86-residue protein sequence, read N- to C-terminus: Large ribosomal subunit protein uL23c (86 aa).

The protein belongs to the universal ribosomal protein uL23 family. In terms of assembly, part of the 50S ribosomal subunit.

The protein resides in the plastid. The protein localises to the chloroplast. In terms of biological role, binds to 23S rRNA. The protein is Large ribosomal subunit protein uL23c (rpl23) of Chlorella vulgaris (Green alga).